Consider the following 272-residue polypeptide: Golgi to ER traffic protein 5 (272 aa).

Disordered regions lie at residues Met1 to Thr35 and Leu85 to Ser105. Residues Ile108–Gly198 form the Ubiquitin-like domain. Residues Ser212–Glu231 form a disordered region.

Belongs to the GET5 family. As to quaternary structure, forms homodimers via its C-terminal domain. Component of the get4/get5/sgt2 sorting complex. Binds directly sgt12 homodimers.

The protein resides in the cytoplasm. Component of the get4/get5/sgt2 sorting complex involved in the GET (guided entry of TA proteins) pathway that leads to the insertion of tail-anchored (TA) proteins into the endoplasmic reticulum. Get4 and get5 form an obligate complex that catalyzes the transfer of tail-anchored proteins destined to the endoplasmic reticulum from sgt2 to the cytosolic targeting factor which then targets the TA protein to the ER membrane via get1/get2. The chain is Golgi to ER traffic protein 5 from Aspergillus fumigatus (strain ATCC MYA-4609 / CBS 101355 / FGSC A1100 / Af293) (Neosartorya fumigata).